Reading from the N-terminus, the 451-residue chain is Chromosomal replication initiator protein DnaA (451 aa).

Positions 1–93 are domain I, interacts with DnaA modulators; that stretch reads MENIDDLWNK…HNQEEEALPE (93 aa). Residues 88 to 108 are disordered; that stretch reads EEALPEQTPQTPPEKDVAGQS. Residues 94 to 113 are domain II; it reads QTPQTPPEKDVAGQSTLSQT. Positions 114–330 are domain III, AAA+ region; it reads MLNDKYTFNT…GALIRVVAYS (217 aa). ATP contacts are provided by Gly-158, Gly-160, Lys-161, and Thr-162. The segment at 331 to 451 is domain IV, binds dsDNA; that stretch reads SLINQDMNAD…VQAITEQLRQ (121 aa).

This sequence belongs to the DnaA family. As to quaternary structure, oligomerizes as a right-handed, spiral filament on DNA at oriC.

The protein resides in the cytoplasm. Its function is as follows. Plays an essential role in the initiation and regulation of chromosomal replication. ATP-DnaA binds to the origin of replication (oriC) to initiate formation of the DNA replication initiation complex once per cell cycle. Binds the DnaA box (a 9 base pair repeat at the origin) and separates the double-stranded (ds)DNA. Forms a right-handed helical filament on oriC DNA; dsDNA binds to the exterior of the filament while single-stranded (ss)DNA is stabiized in the filament's interior. The ATP-DnaA-oriC complex binds and stabilizes one strand of the AT-rich DNA unwinding element (DUE), permitting loading of DNA polymerase. After initiation quickly degrades to an ADP-DnaA complex that is not apt for DNA replication. Binds acidic phospholipids. The polypeptide is Chromosomal replication initiator protein DnaA (Shouchella clausii (strain KSM-K16) (Alkalihalobacillus clausii)).